Reading from the N-terminus, the 702-residue chain is Polyribonucleotide nucleotidyltransferase (702 aa).

Residues Asp485 and Asp491 each contribute to the Mg(2+) site. The 60-residue stretch at 552–611 (PRITTLKINPEKIRDVIGKGGATIRALTEETGTTIELEDDGTVKIASANGEATKEAIRRI) folds into the KH domain. An S1 motif domain is found at 621-689 (GTVYNGKVVR…RQGRVRLSMK (69 aa)).

This sequence belongs to the polyribonucleotide nucleotidyltransferase family. In terms of assembly, component of the RNA degradosome, which is a multiprotein complex involved in RNA processing and mRNA degradation. Requires Mg(2+) as cofactor.

The protein resides in the cytoplasm. The catalysed reaction is RNA(n+1) + phosphate = RNA(n) + a ribonucleoside 5'-diphosphate. Its function is as follows. Involved in mRNA degradation. Catalyzes the phosphorolysis of single-stranded polyribonucleotides processively in the 3'- to 5'-direction. The chain is Polyribonucleotide nucleotidyltransferase from Shewanella woodyi (strain ATCC 51908 / MS32).